The chain runs to 452 residues: Probable diguanylate cyclase DgcT (452 aa).

The Cytoplasmic portion of the chain corresponds to 1-7 (MEKDYLR). The chain crosses the membrane as a helical span at residues 8–28 (ISSTVLVSLLFGLALVLVNSW). At 29–45 (FNQPGVEEVVPRSTYLM) the chain is on the periplasmic side. Residues 46–66 (VMIALFFIDTVAFIFMQLYFI) traverse the membrane as a helical segment. Topologically, residues 67-74 (YDRRQFSN) are cytoplasmic. A helical membrane pass occupies residues 75 to 95 (CVLSLAFLSCLIYFVITVIII). Over 96 to 111 (QQIIEERLTSSVVQND) the chain is Periplasmic. Residues 112–132 (IAIYYLFRQMSLCILIFLALV) traverse the membrane as a helical segment. Topologically, residues 133–148 (NKVSENTKQRNLFSKK) are cytoplasmic. A helical transmembrane segment spans residues 149–169 (MTLCISLFFVFGGPIVAHILS). The Periplasmic portion of the chain corresponds to 170 to 195 (SHYESYNLHIAELTNENGQVVWKASY). Residues 196-216 (VTIMIFMWLTLLSVNLYFNGL) traverse the membrane as a helical segment. The Cytoplasmic segment spans residues 217 to 219 (RYD). A helical transmembrane segment spans residues 220–240 (IWNGVTVIAFCAVLYNISLLF). Over 241-254 (MSRYSVSTWYISRT) the chain is Periplasmic. A helical transmembrane segment spans residues 255 to 275 (IEVVSKLTVMVIFMCHIFSAL). The Cytoplasmic segment spans residues 276 to 452 (RVTKNIAHRD…RDVVNFCESP (177 aa)). The GGDEF domain occupies 310–445 (TPYCVMIMDI…GRNKVVVRDV (136 aa)). Mg(2+) is bound by residues Asp-318 and Ile-319. Positions 326, 331, and 335 each coordinate substrate. Mg(2+) is bound at residue Glu-361. Glu-361 serves as the catalytic Proton acceptor. Position 381 (Arg-381) interacts with substrate.

In terms of assembly, homodimer. Mg(2+) serves as cofactor.

Its subcellular location is the cell inner membrane. The catalysed reaction is 2 GTP = 3',3'-c-di-GMP + 2 diphosphate. Its pathway is purine metabolism; 3',5'-cyclic di-GMP biosynthesis. Its function is as follows. Probably catalyzes the synthesis of cyclic-di-GMP (c-di-GMP) via the condensation of 2 GTP molecules. Overexpression leads to a strong repression of swimming; swimming returns to normal when residues 359-360 are both mutated to Ala. Overexpression also leads to a 20-fold increase in c-di-GMP levels in vivo. Cyclic-di-GMP is a second messenger which controls cell surface-associated traits in bacteria. This chain is Probable diguanylate cyclase DgcT, found in Escherichia coli (strain K12).